The chain runs to 423 residues: Aspartate--tRNA(Asp) ligase (423 aa).

Residue Glu-163 coordinates L-aspartate. An aspartate region spans residues 185 to 188 (QLYK). L-aspartate is bound at residue Arg-207. ATP contacts are provided by residues 207-209 (RAE), 215-217 (RHL), and Glu-346. 2 residues coordinate Mg(2+): Glu-346 and Ser-349. L-aspartate-binding residues include Ser-349 and Arg-353. 394–397 (GLER) is an ATP binding site.

It belongs to the class-II aminoacyl-tRNA synthetase family. Type 2 subfamily. In terms of assembly, homodimer. Mg(2+) is required as a cofactor.

Its subcellular location is the cytoplasm. The enzyme catalyses tRNA(Asp) + L-aspartate + ATP = L-aspartyl-tRNA(Asp) + AMP + diphosphate. Functionally, catalyzes the attachment of L-aspartate to tRNA(Asp) in a two-step reaction: L-aspartate is first activated by ATP to form Asp-AMP and then transferred to the acceptor end of tRNA(Asp). This chain is Aspartate--tRNA(Asp) ligase, found in Picrophilus torridus (strain ATCC 700027 / DSM 9790 / JCM 10055 / NBRC 100828 / KAW 2/3).